Reading from the N-terminus, the 305-residue chain is Protoheme IX farnesyltransferase (305 aa).

9 consecutive transmembrane segments (helical) span residues V31–H51, P52–I72, V96–A118, L123–K145, N151–S171, I179–F199, I225–N245, F247–L267, and F281–I301.

Belongs to the UbiA prenyltransferase family. Protoheme IX farnesyltransferase subfamily.

The protein localises to the cell inner membrane. It carries out the reaction heme b + (2E,6E)-farnesyl diphosphate + H2O = Fe(II)-heme o + diphosphate. Its pathway is porphyrin-containing compound metabolism; heme O biosynthesis; heme O from protoheme: step 1/1. In terms of biological role, converts heme B (protoheme IX) to heme O by substitution of the vinyl group on carbon 2 of heme B porphyrin ring with a hydroxyethyl farnesyl side group. The sequence is that of Protoheme IX farnesyltransferase from Rickettsia rickettsii (strain Iowa).